The following is a 467-amino-acid chain: Probable tryptophanase (467 aa).

Position 263 is an N6-(pyridoxal phosphate)lysine (lysine 263).

Belongs to the beta-eliminating lyase family. The cofactor is pyridoxal 5'-phosphate.

The enzyme catalyses L-tryptophan + H2O = indole + pyruvate + NH4(+). Its pathway is amino-acid degradation; L-tryptophan degradation via pyruvate pathway; indole and pyruvate from L-tryptophan: step 1/1. In Aeropyrum pernix (strain ATCC 700893 / DSM 11879 / JCM 9820 / NBRC 100138 / K1), this protein is Probable tryptophanase (tnaA).